The sequence spans 484 residues: Putative transporter B0252.3 (484 aa).

Transmembrane regions (helical) follow at residues 43-63 (ILTC…TGLC), 95-115 (STTT…PPLA), 121-141 (LPVF…SAFS), 144-164 (IMMF…AGLA), 183-203 (VYFG…AYIL), 208-228 (YLMF…YMTV), 286-306 (MFIV…FIYF), 321-341 (LNFV…PIFM), 348-368 (VLIS…VLSS), 373-393 (IHFW…IYMF), and 433-453 (LAPA…TLIL).

Belongs to the major facilitator superfamily. Sugar transporter (TC 2.A.1.1) family.

It is found in the membrane. The sequence is that of Putative transporter B0252.3 from Caenorhabditis elegans.